We begin with the raw amino-acid sequence, 85 residues long: Defensin-like protein 112 (85 aa).

A signal peptide spans 1 to 24 (MAISKKMLTTFVLTILLAVSFVHC). 4 disulfide bridges follow: cysteine 40/cysteine 80, cysteine 46/cysteine 71, cysteine 56/cysteine 78, and cysteine 60/cysteine 79.

It belongs to the DEFL family.

Its subcellular location is the secreted. In Arabidopsis thaliana (Mouse-ear cress), this protein is Defensin-like protein 112.